The primary structure comprises 521 residues: MMDLFKTDIMPDLQSSMMASIGSNWRFALFVAATLLTSYIVIVRPLKNVLFHPLRKYPGPKLFAGSSIPYGFWYMTGKWHTKIRQLHATYGPVVRIGPDELSYACPEAWEDIYGRYVPAKRKENPKPVWYCSPDAHDMVGASLGDHGRMRRVMTPGFTYSAMCKQEPLIKVHVDLFLEKLRGVCDDGNATVNMLEWFTYCTFDLIGDLSFGEPFGCLENSMLHPWLQLVFANIYVTHIILLCKRIPFFYLFLPIKTTLQLYRDFNRHVILLRQVVERRLSLTTPRNDFLDIMTSKKTSTLYLTNEEIFKNAILLTGGGAETTSSSLTGMAFILTTRPDVKKRIVEELHATFPNEEAINMRSVAQLTYTGAFIEEAMRYYPPGPNTMWRTTPAGGNTILGDYIPENTIIGIPHRVLYRSEAYWKHADEIHPERWLPDGQRPAEFDHDRREGFQPFSYGPRACIAMNLAYAEMRYILARFLWNFDIQETEQSKHWMDNQKAYLVWDKPGLFVRLKPVAKEEAQ.

Residues 23–43 (SNWRFALFVAATLLTSYIVIV) form a helical membrane-spanning segment. Residue N188 is glycosylated (N-linked (GlcNAc...) asparagine). A heme-binding site is contributed by C461.

The protein belongs to the cytochrome P450 family. Heme is required as a cofactor.

Its subcellular location is the membrane. It catalyses the reaction dehydroprobetaenone I + NADPH + O2 + H(+) = epoxybetaenone + NADP(+) + H2O. It carries out the reaction dehydroprobetaenone I + 3 NADPH + 3 O2 + 3 H(+) = betaenone C + 3 NADP(+) + 3 H2O. Its pathway is mycotoxin biosynthesis. In terms of biological role, cytochrome P450 monooxygenase; part of the gene cluster that mediates the biosynthesis of betaenones, phytotoxic polyketides involved in leaf spot disease in sugar beets. The first step of the pathway is the synthesis of dehydroprobetaenone I by the polyketide synthase bet1 and the enoyl reductase bet3 via condensation of one acetyl-CoA starter unit with 7 malonyl-CoA units and 5 methylations. The C-terminal reductase (R) domain of bet1 catalyzes the reductive release of the polyketide chain. Because bet1 lacks a designated enoylreductase (ER) domain, the required activity is provided the enoyl reductase bet3. The short-chain dehydrogenase/reductase bet4 then catalyzes reduction of dehydroprobetaenone I to probetaenone I. The cytochrome P450 monooxygenase bet2 catalyzes successive epoxidation, oxidation (resulting from epoxide opening) and hydroxylation to install a tertiary alcohol in the decaline ring to yield betaenone C from dehydroprobetaenone I and betaenone B from probetaenone I. The FAD-linked oxidoreductase (orf1) is probably responsible for the conversion of betaenone C to betaenone A via an intramolecular aldol reaction between C-1 and C-17 to form the bridged tricyclic system in betaenone A. This is Cytochrome P450 monooxygenase bet2 from Neocamarosporium betae (Beet black rot fungus).